Reading from the N-terminus, the 415-residue chain is tRNA(Met) cytidine acetate ligase (415 aa).

Residues 7 to 20 (VVEY…HRYH), Gly-101, Asn-162, and 187 to 188 (RI) each bind ATP.

This sequence belongs to the TmcAL family.

The protein localises to the cytoplasm. It carries out the reaction cytidine(34) in elongator tRNA(Met) + acetate + ATP = N(4)-acetylcytidine(34) in elongator tRNA(Met) + AMP + diphosphate. Its function is as follows. Catalyzes the formation of N(4)-acetylcytidine (ac(4)C) at the wobble position of elongator tRNA(Met), using acetate and ATP as substrates. First activates an acetate ion to form acetyladenylate (Ac-AMP) and then transfers the acetyl group to tRNA to form ac(4)C34. The protein is tRNA(Met) cytidine acetate ligase of Bacillus velezensis (strain DSM 23117 / BGSC 10A6 / LMG 26770 / FZB42) (Bacillus amyloliquefaciens subsp. plantarum).